The sequence spans 266 residues: Proliferating cell nuclear antigen (266 aa).

The DNA-binding element occupies 61-80 (RCDRNLSMGMNLNNMAKMLK).

This sequence belongs to the PCNA family.

It is found in the nucleus. Functionally, this protein is an auxiliary protein of DNA polymerase delta and is involved in the control of eukaryotic DNA replication by increasing the polymerase's processibility during elongation of the leading strand. This Pisum sativum (Garden pea) protein is Proliferating cell nuclear antigen (PCNA).